We begin with the raw amino-acid sequence, 351 residues long: Protein RecA (351 aa).

An ATP-binding site is contributed by G73 to T80.

This sequence belongs to the RecA family.

The protein resides in the cytoplasm. Its function is as follows. Can catalyze the hydrolysis of ATP in the presence of single-stranded DNA, the ATP-dependent uptake of single-stranded DNA by duplex DNA, and the ATP-dependent hybridization of homologous single-stranded DNAs. It interacts with LexA causing its activation and leading to its autocatalytic cleavage. This chain is Protein RecA, found in Herbaspirillum seropedicae.